Consider the following 59-residue polypeptide: UPF0434 protein SO_2800 (59 aa).

The protein belongs to the UPF0434 family.

In Shewanella oneidensis (strain ATCC 700550 / JCM 31522 / CIP 106686 / LMG 19005 / NCIMB 14063 / MR-1), this protein is UPF0434 protein SO_2800.